Here is a 265-residue protein sequence, read N- to C-terminus: 3-methyl-2-oxobutanoate hydroxymethyltransferase (265 aa).

Asp-45 and Asp-84 together coordinate Mg(2+). 3-methyl-2-oxobutanoate-binding positions include 45–46, Asp-84, and Lys-114; that span reads DS. Glu-116 provides a ligand contact to Mg(2+). The Proton acceptor role is filled by Glu-183.

It belongs to the PanB family. Homodecamer; pentamer of dimers. It depends on Mg(2+) as a cofactor.

It is found in the cytoplasm. The enzyme catalyses 3-methyl-2-oxobutanoate + (6R)-5,10-methylene-5,6,7,8-tetrahydrofolate + H2O = 2-dehydropantoate + (6S)-5,6,7,8-tetrahydrofolate. The protein operates within cofactor biosynthesis; (R)-pantothenate biosynthesis; (R)-pantoate from 3-methyl-2-oxobutanoate: step 1/2. Catalyzes the reversible reaction in which hydroxymethyl group from 5,10-methylenetetrahydrofolate is transferred onto alpha-ketoisovalerate to form ketopantoate. In Salinibacter ruber (strain DSM 13855 / M31), this protein is 3-methyl-2-oxobutanoate hydroxymethyltransferase.